Here is a 395-residue protein sequence, read N- to C-terminus: Argininosuccinate synthase (395 aa).

8-16 serves as a coordination point for ATP; sequence AYSGGLDTS. Residue Y86 participates in L-citrulline binding. G116 contacts ATP. Residues T118, N122, and D123 each coordinate L-aspartate. L-citrulline is bound at residue N122. R126, S173, S182, E257, and Y269 together coordinate L-citrulline.

It belongs to the argininosuccinate synthase family. Type 1 subfamily. As to quaternary structure, homotetramer.

It localises to the cytoplasm. It carries out the reaction L-citrulline + L-aspartate + ATP = 2-(N(omega)-L-arginino)succinate + AMP + diphosphate + H(+). The protein operates within amino-acid biosynthesis; L-arginine biosynthesis; L-arginine from L-ornithine and carbamoyl phosphate: step 2/3. The polypeptide is Argininosuccinate synthase (Methanocaldococcus jannaschii (strain ATCC 43067 / DSM 2661 / JAL-1 / JCM 10045 / NBRC 100440) (Methanococcus jannaschii)).